The following is a 337-amino-acid chain: Calcium-binding protein 39-like (337 aa).

Belongs to the Mo25 family. As to quaternary structure, component of a trimeric complex composed of STK11/LKB1, STRAD (STRADA or STRADB) and CAB39/MO25 (CAB39/MO25alpha or CAB39L/MO25beta): the complex tethers STK11/LKB1 in the cytoplasm and stimulates its catalytic activity.

Functionally, component of a complex that binds and activates STK11/LKB1. In the complex, required to stabilize the interaction between CAB39/MO25 (CAB39/MO25alpha or CAB39L/MO25beta) and STK11/LKB1. The polypeptide is Calcium-binding protein 39-like (Cab39l) (Mus musculus (Mouse)).